Here is a 149-residue protein sequence, read N- to C-terminus: Transcriptional repressor NrdR (149 aa).

The segment at 3-34 (CPFCAAVDTKVIDSRLVSDGSQVRRRRQCLDC) is a zinc-finger region. An ATP-cone domain is found at 49–139 (PRVIKSDDVR…VYRSFEDIRE (91 aa)).

Belongs to the NrdR family. Zn(2+) serves as cofactor.

Its function is as follows. Negatively regulates transcription of bacterial ribonucleotide reductase nrd genes and operons by binding to NrdR-boxes. This chain is Transcriptional repressor NrdR, found in Yersinia enterocolitica serotype O:8 / biotype 1B (strain NCTC 13174 / 8081).